Reading from the N-terminus, the 216-residue chain is Ras-related protein Rab-11A (216 aa).

Gly2 is subject to N-acetylglycine. GTP contacts are provided by Ser20, Gly21, Val22, Gly23, Lys24, Ser25, Asn26, Asn37, Leu38, Ser40, Ser42, and Thr43. Ser25 contributes to the Mg(2+) binding site. The Switch 1 signature appears at 36 to 47 (FNLESKSTIGVE). The Mg(2+) site is built by Thr43 and Asp66. Positions 67-86 (TAGQERYRAITSAYYRGAVG) match the Switch 2 motif. GTP-binding residues include Gly69, Asn124, Lys125, Asp127, Ala155, and Leu156. The segment at 183 to 211 (DRRENDMSPSNNVVPIHVPPTTENKPKVQ) is disordered. S-geranylgeranyl cysteine attachment occurs at residues Cys212 and Cys213. The residue at position 213 (Cys213) is a Cysteine methyl ester. Residues 214 to 216 (QNI) constitute a propeptide, removed in mature form.

This sequence belongs to the small GTPase superfamily. Rab family. Interacts (GTP-bound form) with RAB11FIPs (via their C-termini) including RAB11FIP1, RAB11FIP2, RAB11FIP3, RAB11FIP4 and RAB11FIP5 effectors. Forms a complex with RAB11FIP3 and dynein intermediate chain DYNC1LI1; the interaction between RAB11A1 and RAB11FIP3 is direct; the complex regulates endocytic trafficking. Interacts with EVI5; EVI5 and RAB11FIP3 may be mutually exclusive and compete for binding RAB11A. Interacts with SGSM1, SGSM2, SGSM3 and VIPAS39. Interacts with EXOC6 in a GTP-dependent manner. Interacts with RAB11FIP5. Interacts with STXBP6. Interacts (GDP-bound form) with ZFYVE27. Interacts with BIRC6/bruce. May interact with TBC1D14. Interacts with UNC119; in a cell cycle-dependent manner. GDP-bound and nucleotide-free forms interact with SH3BP5. Interacts (GDP-bound form) with KIF5A in a ZFYVE27-dependent manner. Interacts (GDP-bound form) with RELCH. Found in a complex composed of RELCH, OSBP1 and RAB11A. Interacts with TBC1D12. Interacts with DEF6. Interacts with ATP9A. Forms a heterotetramer with RAB11FIP3; the GTP-bound form is preferred for binding. Forms a complex with Rabin8/RAB3IP and RAB11FIP3, probably a heterohexamer with two of each protein subunit, where Rabin8/RAB3IP and RAB11FIP3 simultaneously bind to RAB11A; the complex promotes preciliary trafficking and cilia growth. Forms a complex containing RAB11A, ASAP1, Rabin8/RAB3IP, RAP11FIP3 and ARF4; the complex promotes preciliary trafficking; the complex binds to RHO in photoreceptor cells and promotes RHO ciliary transport. Interacts (GTP-bound form) with WDR44; the interaction prevents RAB11A-RAB3IP-RAB11FIP3 complex formation. It depends on Mg(2+) as a cofactor. As to expression, detected in various tissues, such as brain, testis, spleen, and heart.

The protein resides in the cell membrane. It localises to the endosome membrane. Its subcellular location is the recycling endosome membrane. The protein localises to the cleavage furrow. It is found in the cytoplasmic vesicle. The protein resides in the phagosome. It localises to the cytoplasmic vesicle membrane. Its subcellular location is the golgi apparatus. The protein localises to the trans-Golgi network. It catalyses the reaction GTP + H2O = GDP + phosphate + H(+). Regulated by guanine nucleotide exchange factors (GEFs) which promote the exchange of bound GDP for free GTP. Regulated by GTPase activating proteins (GAPs) which increase the GTP hydrolysis activity. Inhibited by GDP dissociation inhibitors (GDIs) which prevent Rab-GDP dissociation. The small GTPases Rab are key regulators of intracellular membrane trafficking, from the formation of transport vesicles to their fusion with membranes. Rabs cycle between an inactive GDP-bound form and an active GTP-bound form that is able to recruit to membranes different set of downstream effectors directly responsible for vesicle formation, movement, tethering and fusion. The small Rab GTPase RAB11A regulates endocytic recycling. Forms a functional Rab11/RAB11FIP3/dynein complex that regulates the movement of peripheral sorting endosomes (SE) along microtubule tracks toward the microtubule organizing center/centrosome, generating the endosomal recycling compartment (ERC). Acts as a major regulator of membrane delivery during cytokinesis. Together with MYO5B and RAB8A participates in epithelial cell polarization. Together with Rabin8/RAB3IP, RAB8A, the exocyst complex, PARD3, PRKCI, ANXA2, CDC42 and DNMBP promotes transcytosis of PODXL to the apical membrane initiation sites (AMIS), apical surface formation and lumenogenesis. Together with MYO5B participates in CFTR trafficking to the plasma membrane and TF (Transferrin) recycling in nonpolarized cells. Required in a complex with MYO5B and RAB11FIP2 for the transport of NPC1L1 to the plasma membrane. Participates in the sorting and basolateral transport of CDH1 from the Golgi apparatus to the plasma membrane. Regulates the recycling of FCGRT (receptor of Fc region of monomeric IgG) to basolateral membranes. May also play a role in melanosome transport and release from melanocytes. Promotes Rabin8/RAB3IP preciliary vesicular trafficking to mother centriole by forming a ciliary targeting complex containing Rab11, ASAP1, Rabin8/RAB3IP, RAB11FIP3 and ARF4, thereby regulating ciliogenesis initiation. On the contrary, upon LPAR1 receptor signaling pathway activation, interaction with phosphorylated WDR44 prevents Rab11-RAB3IP-RAB11FIP3 complex formation and cilia growth. Participates in the export of a subset of neosynthesized proteins through a Rab8-Rab10-Rab11-endososomal dependent export route via interaction with WDR44. The chain is Ras-related protein Rab-11A from Rattus norvegicus (Rat).